We begin with the raw amino-acid sequence, 183 residues long: Capsid protein (183 aa).

The interval 136–183 is disordered; that stretch reads NAPILSTLPETTVVRRRGRSPRRRTPSPRRRRSQSPRRRRSQSRESQC. The segment covering 149–176 has biased composition (basic residues); the sequence is VRRRGRSPRRRTPSPRRRRSQSPRRRRS. A phosphoserine; by host mark is found at Ser-155, Ser-162, and Ser-170. The stretch at 155–161 is one 1; half-length repeat; that stretch reads SPRRRTP. The 3 X 8 AA repeats of S-P-R-R-R-[PR]-S-Q stretch occupies residues 155–177; the sequence is SPRRRTPSPRRRRSQSPRRRRSQ. Positions 158 to 175 match the Bipartite nuclear localization signal motif; it reads RRTPSPRRRRSQSPRRRR. Repeat copies occupy residues 162 to 169 and 170 to 177. The tract at residues 177–183 is RNA binding; sequence QSRESQC.

The protein belongs to the orthohepadnavirus core antigen family. Homodimerizes, then multimerizes. Interacts with cytosol exposed regions of viral L glycoprotein present in the reticulum-to-Golgi compartment. Interacts with human FLNB. Phosphorylated form interacts with host importin alpha; this interaction depends on the exposure of the NLS, which itself depends upon genome maturation and/or phosphorylation of the capsid protein. Interacts with host NUP153. Post-translationally, phosphorylated by host SRPK1, SRPK2, and maybe protein kinase C or GAPDH. Phosphorylation is critical for pregenomic RNA packaging. Protein kinase C phosphorylation is stimulated by HBx protein and may play a role in transport of the viral genome to the nucleus at the late step during the viral replication cycle.

It localises to the virion. The protein localises to the host cytoplasm. Its function is as follows. Self assembles to form an icosahedral capsid. Most capsids appear to be large particles with an icosahedral symmetry of T=4 and consist of 240 copies of capsid protein, though a fraction forms smaller T=3 particles consisting of 180 capsid proteins. Entering capsids are transported along microtubules to the nucleus. Phosphorylation of the capsid is thought to induce exposure of nuclear localization signal in the C-terminal portion of the capsid protein that allows binding to the nuclear pore complex via the importin (karyopherin-) alpha and beta. Capsids are imported in intact form through the nuclear pore into the nuclear basket, where it probably binds NUP153. Only capsids that contain the mature viral genome can release the viral DNA and capsid protein into the nucleoplasm. Immature capsids get stuck in the basket. Capsids encapsulate the pre-genomic RNA and the P protein. Pre-genomic RNA is reverse-transcribed into DNA while the capsid is still in the cytoplasm. The capsid can then either be directed to the nucleus, providing more genomes for transcription, or bud through the endoplasmic reticulum to provide new virions. The polypeptide is Capsid protein (Homo sapiens (Human)).